A 261-amino-acid polypeptide reads, in one-letter code: 1-(5-phosphoribosyl)-5-[(5-phosphoribosylamino)methylideneamino] imidazole-4-carboxamide isomerase (261 aa).

The active-site Proton acceptor is the D15. Catalysis depends on D136, which acts as the Proton donor.

Belongs to the HisA/HisF family.

The protein resides in the cytoplasm. It carries out the reaction 1-(5-phospho-beta-D-ribosyl)-5-[(5-phospho-beta-D-ribosylamino)methylideneamino]imidazole-4-carboxamide = 5-[(5-phospho-1-deoxy-D-ribulos-1-ylimino)methylamino]-1-(5-phospho-beta-D-ribosyl)imidazole-4-carboxamide. Its pathway is amino-acid biosynthesis; L-histidine biosynthesis; L-histidine from 5-phospho-alpha-D-ribose 1-diphosphate: step 4/9. The chain is 1-(5-phosphoribosyl)-5-[(5-phosphoribosylamino)methylideneamino] imidazole-4-carboxamide isomerase from Synechococcus sp. (strain JA-2-3B'a(2-13)) (Cyanobacteria bacterium Yellowstone B-Prime).